The sequence spans 151 residues: RNA polymerase-binding transcription factor DksA (151 aa).

The stretch at asparagine 33–glutamate 54 forms a coiled coil. Zn(2+) contacts are provided by cysteine 114, cysteine 117, cysteine 135, and cysteine 138. The dksA C4-type zinc finger occupies cysteine 114–cysteine 138.

This sequence belongs to the DksA family. Interacts directly with the RNA polymerase.

It localises to the cytoplasm. Its function is as follows. Transcription factor that acts by binding directly to the RNA polymerase (RNAP). Required for negative regulation of rRNA expression and positive regulation of several amino acid biosynthesis promoters. Also required for regulation of fis expression. The sequence is that of RNA polymerase-binding transcription factor DksA from Escherichia coli O157:H7.